Here is a 368-residue protein sequence, read N- to C-terminus: Large ribosomal subunit protein bL27m (368 aa).

Residues 1–20 (MFSGLHTSKYACQVVVQIRT) constitute a mitochondrion transit peptide. The tract at residues 23 to 44 (KRAAGSRTSMKDSAGRRLGPKK) is disordered. The segment covering 31–44 (SMKDSAGRRLGPKK) has biased composition (basic and acidic residues).

Belongs to the bacterial ribosomal protein bL27 family.

Its subcellular location is the mitochondrion. Its function is as follows. Component of the large subunit of mitochondrial ribosome. This Candida glabrata (strain ATCC 2001 / BCRC 20586 / JCM 3761 / NBRC 0622 / NRRL Y-65 / CBS 138) (Yeast) protein is Large ribosomal subunit protein bL27m (MRPL2).